The primary structure comprises 284 residues: Orotidine 5'-phosphate decarboxylase (284 aa).

The active-site Proton donor is Lys95.

Belongs to the OMP decarboxylase family. Type 2 subfamily.

It catalyses the reaction orotidine 5'-phosphate + H(+) = UMP + CO2. It functions in the pathway pyrimidine metabolism; UMP biosynthesis via de novo pathway; UMP from orotate: step 2/2. The chain is Orotidine 5'-phosphate decarboxylase from Leptothrix cholodnii (strain ATCC 51168 / LMG 8142 / SP-6) (Leptothrix discophora (strain SP-6)).